The following is a 738-amino-acid chain: 1,4-alpha-glucan branching enzyme GlgB (738 aa).

Asp399 serves as the catalytic Nucleophile. Catalysis depends on Glu452, which acts as the Proton donor.

Belongs to the glycosyl hydrolase 13 family. GlgB subfamily. Monomer.

It carries out the reaction Transfers a segment of a (1-&gt;4)-alpha-D-glucan chain to a primary hydroxy group in a similar glucan chain.. The protein operates within glycan biosynthesis; glycogen biosynthesis. Its function is as follows. Catalyzes the formation of the alpha-1,6-glucosidic linkages in glycogen by scission of a 1,4-alpha-linked oligosaccharide from growing alpha-1,4-glucan chains and the subsequent attachment of the oligosaccharide to the alpha-1,6 position. The protein is 1,4-alpha-glucan branching enzyme GlgB of Chlamydia trachomatis serovar L2b (strain UCH-1/proctitis).